The following is a 193-amino-acid chain: UPF0301 protein Fphi_1754 (193 aa).

It belongs to the UPF0301 (AlgH) family.

In Francisella philomiragia subsp. philomiragia (strain ATCC 25017 / CCUG 19701 / FSC 153 / O#319-036), this protein is UPF0301 protein Fphi_1754.